The following is a 346-amino-acid chain: Hydroxymethylglutaryl-CoA synthase (346 aa).

D28 contacts (3S)-3-hydroxy-3-methylglutaryl-CoA. The active-site Proton donor/acceptor is E80. (3S)-3-hydroxy-3-methylglutaryl-CoA-binding residues include C112 and T153. The active-site Acyl-thioester intermediate is C112. R199 serves as a coordination point for CoA. 2 residues coordinate (3S)-3-hydroxy-3-methylglutaryl-CoA: T201 and H234. The active-site Proton donor/acceptor is H234. Residue K239 participates in CoA binding. K243, N266, and S296 together coordinate (3S)-3-hydroxy-3-methylglutaryl-CoA.

It belongs to the thiolase-like superfamily. Archaeal HMG-CoA synthase family. Interacts with acetoacetyl-CoA thiolase that catalyzes the precedent step in the pathway and with a DUF35 protein. The acetoacetyl-CoA thiolase/HMG-CoA synthase complex channels the intermediate via a fused CoA-binding site, which allows for efficient coupling of the endergonic thiolase reaction with the exergonic HMGCS reaction.

The catalysed reaction is acetoacetyl-CoA + acetyl-CoA + H2O = (3S)-3-hydroxy-3-methylglutaryl-CoA + CoA + H(+). Its pathway is metabolic intermediate biosynthesis; (R)-mevalonate biosynthesis; (R)-mevalonate from acetyl-CoA: step 2/3. Its function is as follows. Catalyzes the condensation of acetyl-CoA with acetoacetyl-CoA to form 3-hydroxy-3-methylglutaryl-CoA (HMG-CoA). Functions in the mevalonate (MVA) pathway leading to isopentenyl diphosphate (IPP), a key precursor for the biosynthesis of isoprenoid compounds that are building blocks of archaeal membrane lipids. This Methanothermobacter thermautotrophicus (strain ATCC 29096 / DSM 1053 / JCM 10044 / NBRC 100330 / Delta H) (Methanobacterium thermoautotrophicum) protein is Hydroxymethylglutaryl-CoA synthase.